Consider the following 192-residue polypeptide: Ribosome maturation factor RimP (192 aa).

This sequence belongs to the RimP family.

Its subcellular location is the cytoplasm. Functionally, required for maturation of 30S ribosomal subunits. In Mycobacterium sp. (strain JLS), this protein is Ribosome maturation factor RimP.